We begin with the raw amino-acid sequence, 62 residues long: Photosystem II reaction center protein Z (62 aa).

2 consecutive transmembrane segments (helical) span residues 8-28 and 41-61; these read AVFA…VVFA and FSGT…NSLI.

The protein belongs to the PsbZ family. PSII is composed of 1 copy each of membrane proteins PsbA, PsbB, PsbC, PsbD, PsbE, PsbF, PsbH, PsbI, PsbJ, PsbK, PsbL, PsbM, PsbT, PsbY, PsbZ, Psb30/Ycf12, at least 3 peripheral proteins of the oxygen-evolving complex and a large number of cofactors. It forms dimeric complexes.

The protein localises to the plastid. It is found in the chloroplast thylakoid membrane. May control the interaction of photosystem II (PSII) cores with the light-harvesting antenna, regulates electron flow through the 2 photosystem reaction centers. PSII is a light-driven water plastoquinone oxidoreductase, using light energy to abstract electrons from H(2)O, generating a proton gradient subsequently used for ATP formation. The sequence is that of Photosystem II reaction center protein Z from Arabidopsis thaliana (Mouse-ear cress).